A 141-amino-acid polypeptide reads, in one-letter code: Large ribosomal subunit protein uL22 (141 aa).

It belongs to the universal ribosomal protein uL22 family. Part of the 50S ribosomal subunit.

This protein binds specifically to 23S rRNA; its binding is stimulated by other ribosomal proteins, e.g. L4, L17, and L20. It is important during the early stages of 50S assembly. It makes multiple contacts with different domains of the 23S rRNA in the assembled 50S subunit and ribosome. In terms of biological role, the globular domain of the protein is located near the polypeptide exit tunnel on the outside of the subunit, while an extended beta-hairpin is found that lines the wall of the exit tunnel in the center of the 70S ribosome. This is Large ribosomal subunit protein uL22 from Frankia alni (strain DSM 45986 / CECT 9034 / ACN14a).